The following is an 89-amino-acid chain: uncharacterized protein (89 aa).

A helical transmembrane segment spans residues 39 to 61 (FVCFWSIWFWTGDISFSLLSMLV).

The protein localises to the membrane. This is an uncharacterized protein from Saccharomyces cerevisiae (strain ATCC 204508 / S288c) (Baker's yeast).